Reading from the N-terminus, the 313-residue chain is tRNA dimethylallyltransferase (313 aa).

13–20 (GPTASGKT) serves as a coordination point for ATP. Residue 15–20 (TASGKT) participates in substrate binding. Interaction with substrate tRNA stretches follow at residues 38-41 (DSAL), 162-166 (QRLSR), 243-248 (RCVGYR), and 276-283 (KRQITWLR).

Belongs to the IPP transferase family. As to quaternary structure, monomer. It depends on Mg(2+) as a cofactor.

It catalyses the reaction adenosine(37) in tRNA + dimethylallyl diphosphate = N(6)-dimethylallyladenosine(37) in tRNA + diphosphate. Catalyzes the transfer of a dimethylallyl group onto the adenine at position 37 in tRNAs that read codons beginning with uridine, leading to the formation of N6-(dimethylallyl)adenosine (i(6)A). The polypeptide is tRNA dimethylallyltransferase (Aliivibrio salmonicida (strain LFI1238) (Vibrio salmonicida (strain LFI1238))).